The chain runs to 548 residues: Non-structural protein NS1 (548 aa).

It belongs to the orbivirus non-structural protein NS1 family.

This is Non-structural protein NS1 (Segment-5) from African horse sickness virus (AHSV).